The primary structure comprises 512 residues: tRNA-2-methylthio-N(6)-dimethylallyladenosine synthase (512 aa).

Residues Arg-17–His-133 form the MTTase N-terminal domain. [4Fe-4S] cluster-binding residues include Cys-26, Cys-62, Cys-96, Cys-170, Cys-174, and Cys-177. Residues Arg-156–Glu-392 enclose the Radical SAM core domain. The TRAM domain occupies Arg-395–Val-461. Residues Thr-473–Glu-512 are disordered.

The protein belongs to the methylthiotransferase family. MiaB subfamily. Monomer. The cofactor is [4Fe-4S] cluster.

The protein localises to the cytoplasm. The enzyme catalyses N(6)-dimethylallyladenosine(37) in tRNA + (sulfur carrier)-SH + AH2 + 2 S-adenosyl-L-methionine = 2-methylsulfanyl-N(6)-dimethylallyladenosine(37) in tRNA + (sulfur carrier)-H + 5'-deoxyadenosine + L-methionine + A + S-adenosyl-L-homocysteine + 2 H(+). Catalyzes the methylthiolation of N6-(dimethylallyl)adenosine (i(6)A), leading to the formation of 2-methylthio-N6-(dimethylallyl)adenosine (ms(2)i(6)A) at position 37 in tRNAs that read codons beginning with uridine. This chain is tRNA-2-methylthio-N(6)-dimethylallyladenosine synthase, found in Corynebacterium jeikeium (strain K411).